We begin with the raw amino-acid sequence, 432 residues long: Glutamate-1-semialdehyde 2,1-aminomutase (432 aa).

Lysine 272 is subject to N6-(pyridoxal phosphate)lysine.

Belongs to the class-III pyridoxal-phosphate-dependent aminotransferase family. HemL subfamily. In terms of assembly, homodimer. Pyridoxal 5'-phosphate is required as a cofactor.

It is found in the cytoplasm. It catalyses the reaction (S)-4-amino-5-oxopentanoate = 5-aminolevulinate. It functions in the pathway porphyrin-containing compound metabolism; protoporphyrin-IX biosynthesis; 5-aminolevulinate from L-glutamyl-tRNA(Glu): step 2/2. The protein operates within porphyrin-containing compound metabolism; chlorophyll biosynthesis. This Acaryochloris marina (strain MBIC 11017) protein is Glutamate-1-semialdehyde 2,1-aminomutase.